Here is a 339-residue protein sequence, read N- to C-terminus: DNA-directed RNA polymerase subunit alpha (339 aa).

Residues 1–233 (MVREEVAGST…DLFLPFLHAE (233 aa)) are alpha N-terminal domain (alpha-NTD). An alpha C-terminal domain (alpha-CTD) region spans residues 266 to 339 (GIPLNCIFID…IDLLKNKLSF (74 aa)).

This sequence belongs to the RNA polymerase alpha chain family. In terms of assembly, in plastids the minimal PEP RNA polymerase catalytic core is composed of four subunits: alpha, beta, beta', and beta''. When a (nuclear-encoded) sigma factor is associated with the core the holoenzyme is formed, which can initiate transcription.

The protein localises to the plastid. Its subcellular location is the chloroplast. It catalyses the reaction RNA(n) + a ribonucleoside 5'-triphosphate = RNA(n+1) + diphosphate. Functionally, DNA-dependent RNA polymerase catalyzes the transcription of DNA into RNA using the four ribonucleoside triphosphates as substrates. In Hordeum bulbosum (Bulbous barley), this protein is DNA-directed RNA polymerase subunit alpha.